We begin with the raw amino-acid sequence, 617 residues long: MRFLFPTRLINNSSLGLLRSPHTTAPIRSLWFRTKSPVFRSATTPIMTAVAFSSSLSIPPTSEEALPGKLWIKFNRECLFSIYSPFAVCLAAGNLKIDTFRQYIAQDVHFLKAFAHAYELAADCADDDDDKLAISDLRKSVMEELKMHDSFVQDWDLDINKEVSVNSATLRYTEFLLATASGKVEGCKAPGMLDTPFEKTKVAAYTLGAVTPCMRLYAFLGKEFGSLLDLSDVNHPYKKWIDNYSSDAFQASAKQTEDLLEKLSVSMTGEELDIIEKLYQQAMKLEVEFFHAQPLAQPTIVPLLKNHSKDDLVIFSDFDLTCTVVDSSAILAEIAIVTAPKDEQSRSGQQIHRMLSSDLKNTWNLLSKQYTEHYEECIESILNKKKADKFDYEGLCKALEQLSDFEKEANNRVIESGVLKGLNLEDIKRAGERLILQDGCINVFQKILKTENLNAELHVLSYCWCGDLIRAAFSAGGVDAVEVHANEFTFEESISTGEIERKVESPINKAQQFKSILQNRKNENNKKSFLSVYIGDSVGDLLCLLEADIGIVVSSSSSLRRVGSHFGVSFVPLFSGIVQKQKQHTEESSSSAWKGLSGTLYTVSSWAEIHSFALGWE.

Residues 1–28 constitute a mitochondrion transit peptide; that stretch reads MRFLFPTRLINNSSLGLLRSPHTTAPIR. Asp107 serves as a coordination point for substrate. The active-site Nucleophile is the Cys213. Tyr217 and Tyr244 together coordinate substrate. Catalysis depends on Glu286, which acts as the Proton donor.

The protein in the N-terminal section; belongs to the TenA family. It in the C-terminal section; belongs to the HAD-like hydrolase superfamily.

The protein resides in the mitochondrion. Its subcellular location is the cytoplasm. The catalysed reaction is thiamine phosphate + H2O = thiamine + phosphate. It carries out the reaction 4-amino-5-aminomethyl-2-methylpyrimidine + H2O = 4-amino-5-hydroxymethyl-2-methylpyrimidine + NH4(+). May be involved in the salvage of thiamine breakdown products. This protein has a haloacid dehalogenase family domain fused to its TenA domain. Phosphatase with the highest activity against thiamine monophosphate (ThMP) and, with a lower activity, against thiamine diphosphate (ThDP), flavin mononucleotide, inorganic pyrophosphate, CTP and dATP. Has a thiamine salvage hydrolase activity, but only against 4-amino-5-aminomethyl-2-methylpyrimidine (amino-HMP) and not against N-formylamino-HMP, desthiothiamine, thiamine, ThMP, and ThDP. The polypeptide is Bifunctional TH2 protein, mitochondrial (Arabidopsis thaliana (Mouse-ear cress)).